A 494-amino-acid chain; its full sequence is Ankyrin repeat domain-containing protein 33B (494 aa).

A disordered region spans residues 1 to 80 (MVLLAGTGPE…SAESVPEGVP (80 aa)). The span at 30–42 (VEEDPADYEEFED) shows a compositional bias: acidic residues. ANK repeat units lie at residues 84 to 113 (PETA…SVEE), 120 to 150 (NGRT…DVNW), 154 to 183 (EGNT…GLDL), 189 to 218 (FGFT…DVHA), and 223 to 255 (RGMS…PEQF). Residues 349-494 (RAARGPQAQE…RRTAPWKKRT (146 aa)) are disordered. Residues 371–382 (TGQEDADSREGS) show a composition bias toward basic and acidic residues. Serine 405 is modified (phosphoserine). 2 stretches are compositionally biased toward basic and acidic residues: residues 440 to 451 (RPARKGSTKDSG) and 459 to 487 (RYKE…ERRT). Positions 459–488 (RYKEAKEEKRKAEEAEKKRQAEAQKERRTA) form a coiled coil.

The sequence is that of Ankyrin repeat domain-containing protein 33B (ANKRD33B) from Homo sapiens (Human).